A 359-amino-acid polypeptide reads, in one-letter code: MTGFLPEPLRMLVTSPALLDFTSDGPLPYALRQKFTGKPPPVTSNLSLASQTVLVTGATSGVGLEAARQLAQLGPRLLILGVRNASKAEQIKSELERDTPNLTVQVAELDLESLLSVDRFVDELSANSIRLDLALLNAGFFAHDDRITDDGYSPLFQVNFLSTAYLTLKLLPLLHTTAPPHPPGTTTPPGPRLVLVTSEAHAWTTFPDVPRPTENRTQPILSVFQDKNTLGSADDQYARAKLLLALFGKELSRRLTAAENDTTVVITTPGFCASNFFPDGMMTRLIQLTSARSVQQGGALHVFAATAPGPEIHGAYLRDGKPTGLSKFAQGPQGQILQERLWGEMEEFFMQRGGSPLGM.

NADP(+) is bound by residues K87, D110, N137, Y237, and K241. Residue Y237 is the Proton donor of the active site. The active-site Lowers pKa of active site Tyr is the K241.

This sequence belongs to the short-chain dehydrogenases/reductases (SDR) family.

The protein operates within antifungal biosynthesis. Its function is as follows. Short chain dehydrogenase; part of the gene cluster that mediates the biosynthesis of the tetrahydropyranyl antifungal agent restricticin that acts as an inhibitor of CYP51 and blocks the ergosterol biosynthesis. The highly reducing polyketide synthase resH, the short chain dehydrogenase resG, the cyclase resF, the FAD-dependent monooxygenase resA and the enoylreductase resD are required to generate the first stable intermediate desmethylrestrictinol. ResH with resD biosynthesize the first polyketide chain intermediate that is reduced by resG, followed by epoxidation by resA before 6-endo cyclization via epoxide opening by resF leads to desmethylrestrictinol. The methyltransferase resE then catalyzes the C4 O-methylation of desmethylrestrictinol to produce restrictinol, and the nonribosomal peptide synthetase resC catalyzes the C3 esterification of restrictinol with glycine that leads to restricticin. The chain is Short chain dehydrogenase resG from Aspergillus sclerotiorum.